Reading from the N-terminus, the 126-residue chain is Histone H2B type 1-N (126 aa).

Over residues methionine 1–lysine 12 the composition is skewed to low complexity. A disordered region spans residues methionine 1–glutamate 36. Proline 2 is subject to N-acetylproline. Glutamate 3 carries the post-translational modification ADP-ribosyl glutamic acid. Residue lysine 6 is modified to N6-(2-hydroxyisobutyryl)lysine; alternate. At lysine 6 the chain carries N6-(beta-hydroxybutyryl)lysine; alternate. An N6-acetyllysine; alternate modification is found at lysine 6. Position 6 is an N6-butyryllysine; alternate (lysine 6). Lysine 6 is subject to N6-crotonyllysine; alternate. Residue lysine 6 is modified to N6-lactoyllysine; alternate. A Glycyl lysine isopeptide (Lys-Gly) (interchain with G-Cter in SUMO2); alternate cross-link involves residue lysine 6. Serine 7 carries the post-translational modification ADP-ribosylserine. An N6-(beta-hydroxybutyryl)lysine; alternate modification is found at lysine 12. N6-acetyllysine; alternate is present on residues lysine 12 and lysine 13. Residues lysine 12 and lysine 13 each carry the N6-crotonyllysine; alternate modification. Lysine 12 is subject to N6-lactoyllysine; alternate. Position 13 is an N6-(2-hydroxyisobutyryl)lysine; alternate (lysine 13). Serine 15 is modified (phosphoserine; by STK4/MST1). An N6-acetyllysine; alternate mark is found at lysine 16, lysine 17, lysine 21, and lysine 24. N6-crotonyllysine; alternate occurs at positions 16, 17, 21, and 24. 4 positions are modified to N6-lactoyllysine; alternate: lysine 16, lysine 17, lysine 21, and lysine 24. Lysine 17 carries the post-translational modification N6-glutaryllysine; alternate. N6-(2-hydroxyisobutyryl)lysine; alternate occurs at positions 21 and 24. Lysine 21 bears the N6-(beta-hydroxybutyryl)lysine; alternate mark. N6-butyryllysine; alternate is present on lysine 21. Lysine 21 participates in a covalent cross-link: Glycyl lysine isopeptide (Lys-Gly) (interchain with G-Cter in SUMO2); alternate. Position 25 is an N6-(2-hydroxyisobutyryl)lysine (lysine 25). Lysine 35 is subject to N6-(2-hydroxyisobutyryl)lysine; alternate. Lysine 35 carries the N6-(beta-hydroxybutyryl)lysine; alternate modification. Position 35 is an N6-crotonyllysine; alternate (lysine 35). N6-glutaryllysine; alternate is present on lysine 35. Lysine 35 is modified (N6-succinyllysine; alternate). A Glycyl lysine isopeptide (Lys-Gly) (interchain with G-Cter in ubiquitin); alternate cross-link involves residue lysine 35. A PolyADP-ribosyl glutamic acid modification is found at glutamate 36. Serine 37 carries the post-translational modification Phosphoserine; by AMPK. Residues lysine 44, lysine 47, and lysine 58 each carry the N6-(2-hydroxyisobutyryl)lysine; alternate modification. N6-lactoyllysine; alternate is present on lysine 44. Lysine 44 and lysine 47 each carry N6-glutaryllysine; alternate. Lysine 47 carries the post-translational modification N6-methyllysine; alternate. The residue at position 58 (lysine 58) is an N6,N6-dimethyllysine; alternate. Arginine 80 carries the post-translational modification Dimethylated arginine. The residue at position 86 (lysine 86) is an N6-(2-hydroxyisobutyryl)lysine; alternate. Lysine 86 is modified (N6-acetyllysine; alternate). An N6-lactoyllysine; alternate modification is found at lysine 86. Lysine 86 carries the N6,N6,N6-trimethyllysine; alternate modification. Omega-N-methylarginine is present on residues arginine 87 and arginine 93. At lysine 109 the chain carries N6-(2-hydroxyisobutyryl)lysine; alternate. Lysine 109 carries the N6-lactoyllysine; alternate modification. At lysine 109 the chain carries N6-glutaryllysine; alternate. An N6-methyllysine; alternate modification is found at lysine 109. Serine 113 carries O-linked (GlcNAc) serine glycosylation. At threonine 116 the chain carries Phosphothreonine. Residues lysine 117 and lysine 121 each carry the N6-(2-hydroxyisobutyryl)lysine; alternate modification. The residue at position 117 (lysine 117) is an N6-(beta-hydroxybutyryl)lysine; alternate. Residues lysine 117 and lysine 121 each carry the N6-lactoyllysine; alternate modification. N6-glutaryllysine; alternate occurs at positions 117 and 121. 2 positions are modified to N6-succinyllysine; alternate: lysine 117 and lysine 121. N6-methylated lysine; alternate is present on lysine 117. Residue lysine 121 forms a Glycyl lysine isopeptide (Lys-Gly) (interchain with G-Cter in ubiquitin); alternate linkage.

This sequence belongs to the histone H2B family. In terms of assembly, the nucleosome is a histone octamer containing two molecules each of H2A, H2B, H3 and H4 assembled in one H3-H4 heterotetramer and two H2A-H2B heterodimers. The octamer wraps approximately 147 bp of DNA. In terms of processing, monoubiquitination at Lys-35 (H2BK34Ub) by the MSL1/MSL2 dimer is required for histone H3 'Lys-4' (H3K4me) and 'Lys-79' (H3K79me) methylation and transcription activation at specific gene loci, such as HOXA9 and MEIS1 loci. Similarly, monoubiquitination at Lys-121 (H2BK120Ub) by the RNF20/40 complex gives a specific tag for epigenetic transcriptional activation and is also prerequisite for histone H3 'Lys-4' and 'Lys-79' methylation. It also functions cooperatively with the FACT dimer to stimulate elongation by RNA polymerase II. H2BK120Ub also acts as a regulator of mRNA splicing: deubiquitination by USP49 is required for efficient cotranscriptional splicing of a large set of exons. Phosphorylated on Ser-15 (H2BS14ph) by STK4/MST1 during apoptosis; which facilitates apoptotic chromatin condensation. Also phosphorylated on Ser-15 in response to DNA double strand breaks (DSBs), and in correlation with somatic hypermutation and immunoglobulin class-switch recombination. Phosphorylation at Ser-37 (H2BS36ph) by AMPK in response to stress promotes transcription. Post-translationally, glcNAcylation at Ser-113 promotes monoubiquitination of Lys-121. It fluctuates in response to extracellular glucose, and associates with transcribed genes. In terms of processing, ADP-ribosylated by PARP1 or PARP2 on Ser-7 (H2BS6ADPr) in response to DNA damage. H2BS6ADPr promotes recruitment of CHD1L. Mono-ADP-ribosylated on Glu-3 (H2BE2ADPr) by PARP3 in response to single-strand breaks. Poly ADP-ribosylation on Glu-36 (H2BE35ADPr) by PARP1 regulates adipogenesis: it inhibits phosphorylation at Ser-37 (H2BS36ph), thereby blocking expression of pro-adipogenetic genes. Crotonylation (Kcr) is specifically present in male germ cells and marks testis-specific genes in post-meiotic cells, including X-linked genes that escape sex chromosome inactivation in haploid cells. Crotonylation marks active promoters and enhancers and confers resistance to transcriptional repressors. It is also associated with post-meiotically activated genes on autosomes. Post-translationally, lactylated in macrophages by EP300/P300 by using lactoyl-CoA directly derived from endogenous or exogenous lactate, leading to stimulates gene transcription.

The protein resides in the nucleus. It localises to the chromosome. Its function is as follows. Core component of nucleosome. Nucleosomes wrap and compact DNA into chromatin, limiting DNA accessibility to the cellular machineries which require DNA as a template. Histones thereby play a central role in transcription regulation, DNA repair, DNA replication and chromosomal stability. DNA accessibility is regulated via a complex set of post-translational modifications of histones, also called histone code, and nucleosome remodeling. The protein is Histone H2B type 1-N (H2BC15) of Bos taurus (Bovine).